Here is a 300-residue protein sequence, read N- to C-terminus: Probable acetyltransferase Rv3034c (300 aa).

The signal sequence occupies residues 1–25 (MNVLSLGSSSGVVWGRVPITAPAGA).

The protein belongs to the transferase hexapeptide repeat family.

In terms of biological role, may be involved in the biosynthesis of 6-O-methylglucosyl-containing lipopolysaccharides (MGLP). Regulates host peroxisome homeostasis in response to intracellular redox levels to favor mycobacterial infection in macrophage. Induces the expression of host peroxisome biogenesis and proliferation factors as well as peroxisome associated enzymes. Inhibits the induction of host pexophagy mechanism by down-regulating the expression of pexophagy associated proteins and adapter molecules in infected macrophages. However, during increased oxidative stress conditions, it induces degradation of dysfunctional and damaged peroxisomes. Regulation of peroxisome biogenesis and degradation is dependent upon host p-mTORC1 mediated signaling pathway. The chain is Probable acetyltransferase Rv3034c from Mycobacterium tuberculosis (strain ATCC 25618 / H37Rv).